The following is a 437-amino-acid chain: UDP-N-acetylmuramoylalanine--D-glutamate ligase (437 aa).

An ATP-binding site is contributed by 112 to 118; that stretch reads GSNGKST.

Belongs to the MurCDEF family.

The protein localises to the cytoplasm. It carries out the reaction UDP-N-acetyl-alpha-D-muramoyl-L-alanine + D-glutamate + ATP = UDP-N-acetyl-alpha-D-muramoyl-L-alanyl-D-glutamate + ADP + phosphate + H(+). Its pathway is cell wall biogenesis; peptidoglycan biosynthesis. In terms of biological role, cell wall formation. Catalyzes the addition of glutamate to the nucleotide precursor UDP-N-acetylmuramoyl-L-alanine (UMA). The polypeptide is UDP-N-acetylmuramoylalanine--D-glutamate ligase (Haemophilus influenzae (strain 86-028NP)).